Reading from the N-terminus, the 313-residue chain is Olfactory receptor 8C8 (313 aa).

Residues 1–27 (MMQITMENKSSVSEFILMGLTDQPELQ) lie on the Extracellular side of the membrane. A glycan (N-linked (GlcNAc...) asparagine) is linked at Asn8. A helical transmembrane segment spans residues 28 to 48 (LPLFVLFLMNYTATVMGNLTL). The Cytoplasmic segment spans residues 49-59 (MNLICLNSNLH). The helical transmembrane segment at 60–80 (TPMYFFLFNLSFIDFCYSMVF) threads the bilayer. At 81–96 (TPKMLMSFILEKNTIS) the chain is on the extracellular side. A helical transmembrane segment spans residues 97 to 117 (FGGCMAQLFFFLFFVNSESYV). Cys100 and Cys192 are disulfide-bonded. Residues 118-136 (LTAMAYDRYVAICKPLTYK) lie on the Cytoplasmic side of the membrane. A helical transmembrane segment spans residues 137–157 (VIMSPKICCLLIFSSYLMGFA). At 158–208 (SAMAHTGCMIRLSFCDSNIINHYMCDIFPLLPLSCSSTYVNELMSSVVVGS) the chain is on the extracellular side. The chain crosses the membrane as a helical span at residues 209–229 (AIILCCLIILISYAMILFNII). Over 230 to 239 (HMSSGKGWSK) the chain is Cytoplasmic. Residues 240 to 260 (ALGTCGSHIITVSLFYGSGLL) traverse the membrane as a helical segment. Over 261–274 (AYVKPSSAKTVGQG) the chain is Extracellular. A helical membrane pass occupies residues 275 to 295 (KFFSVFYTLLVPMLNPLIYSL). The Cytoplasmic segment spans residues 296–313 (RNKDVKLAVKKTWKRITS).

This sequence belongs to the G-protein coupled receptor 1 family. As to expression, expressed in neurons in the olfactory epithelium.

It is found in the cell membrane. Potential odorant receptor. This Mus musculus (Mouse) protein is Olfactory receptor 8C8.